The chain runs to 252 residues: Ribonuclease 3 (252 aa).

An RNase III domain is found at 3 to 125 (LATLETRLDH…IFGAAFLDGG (123 aa)). Residue glutamate 38 coordinates Mg(2+). Aspartate 42 is a catalytic residue. Mg(2+) is bound by residues aspartate 111 and glutamate 114. Residue glutamate 114 is part of the active site. One can recognise a DRBM domain in the interval 152 to 222 (DAKTLLQEFL…AKLALEAAQA (71 aa)).

The protein belongs to the ribonuclease III family. In terms of assembly, homodimer. Requires Mg(2+) as cofactor.

It localises to the cytoplasm. It carries out the reaction Endonucleolytic cleavage to 5'-phosphomonoester.. In terms of biological role, digests double-stranded RNA. Involved in the processing of primary rRNA transcript to yield the immediate precursors to the large and small rRNAs (23S and 16S). Processes some mRNAs, and tRNAs when they are encoded in the rRNA operon. Processes pre-crRNA and tracrRNA of type II CRISPR loci if present in the organism. This is Ribonuclease 3 from Bordetella petrii (strain ATCC BAA-461 / DSM 12804 / CCUG 43448).